Consider the following 201-residue polypeptide: 3-isopropylmalate dehydratase small subunit (201 aa).

The protein belongs to the LeuD family. LeuD type 1 subfamily. As to quaternary structure, heterodimer of LeuC and LeuD.

The enzyme catalyses (2R,3S)-3-isopropylmalate = (2S)-2-isopropylmalate. It functions in the pathway amino-acid biosynthesis; L-leucine biosynthesis; L-leucine from 3-methyl-2-oxobutanoate: step 2/4. Functionally, catalyzes the isomerization between 2-isopropylmalate and 3-isopropylmalate, via the formation of 2-isopropylmaleate. This Cereibacter sphaeroides (strain KD131 / KCTC 12085) (Rhodobacter sphaeroides) protein is 3-isopropylmalate dehydratase small subunit.